Consider the following 299-residue polypeptide: Circadian clock oscillator protein KaiA (299 aa).

The psR domain, binds oxidized quinones stretch occupies residues 1–135 (MQSPLSLCLF…LHLGPICTLP (135 aa)). In terms of domain architecture, KaiA N-terminal spans 1 to 169 (MQSPLSLCLF…RLADKLKERL (169 aa)). A flexible linker region spans residues 170–178 (GYLGVYYKR). In terms of domain architecture, KaiA C-terminal spans 179–287 (KPSHFYRNFS…GEMYRRSIPR (109 aa)).

This sequence belongs to the KaiA family. Homodimer. The KaiABC1 complex composition changes during the circadian cycle to control KaiC1 phosphorylation. Complexes KaiC1(6), KaiA(2-4):KaiC1(6), KaiB(6):KaiC1(6) and KaiC1(6):KaiB(6):KaiA(12) are among the most important forms, many form cooperatively. KaiA and CikA bind to the same region of the KaiB(fs) form and therefore compete. Interacts with KaiC1 but not KaiC2 or KaiC3. Interacts with itself, not seen to interact with other Kai proteins.

Functionally, key component of the KaiABC oscillator complex, which constitutes the main circadian regulator in cyanobacteria. Complex composition changes during the circadian cycle to control KaiC phosphorylation. KaiA stimulates KaiC autophosphorylation, while KaiB sequesters KaiA, leading to KaiC autodephosphorylation. KaiA binding to the KaiC CII domain during the subjective day yields KaiA(2-4):KaiC(6) complexes which stimulate KaiC autophosphorylation. Phospho-Ser-431 KaiC accumulation triggers binding of KaiB during the subjective night to form the KaiB(6):KaiC(6) complex, leading to changes in the output regulators CikA and SasA. KaiB(6):KaiC(6) formation exposes a site for KaiA binding on KaiB that sequesters KaiA from KaiC's CII domain, making the KaiC(6):KaiB(6):KaiA(12) complex resulting in KaiC autodephosphorylation. Complete dephosphorylation of KaiC leads to dissociation of KaiA(2):KaiB(1), completing 1 cycle of the Kai oscillator. Component of the oscillator and circadian clock in this organism, enhances fitness in a rhythmic environment. Stimulates KaiC1 to autophosphorylate, has no effect on the kinase activity of KaiC2 or KaiC3. In terms of biological role, binds oxidized quinones via the N-terminal PsR domain, allowing it to sense redox changes and possibly mediate clock input. This chain is Circadian clock oscillator protein KaiA, found in Synechocystis sp. (strain ATCC 27184 / PCC 6803 / Kazusa).